The following is a 295-amino-acid chain: Transcriptional regulator SirC (295 aa).

Residues 195–292 (EKVYNIIISD…KITPLSFMRT (98 aa)) form the HTH araC/xylS-type domain. 2 DNA-binding regions (H-T-H motif) span residues 212–233 (AEVA…AAEE) and 259–282 (ISQV…KRHF).

Its function is as follows. Positive regulator of the expression of the invasion-associated type III secretion system encoded within SPI-1 (pathogenicity island 1). The polypeptide is Transcriptional regulator SirC (sirC) (Salmonella typhimurium (strain SL1344)).